A 516-amino-acid polypeptide reads, in one-letter code: Putative protein NRT1/ PTR FAMILY 2.2 (516 aa).

Transmembrane regions (helical) follow at residues 31–51, 67–87, 90–110, 138–158, 174–194, 201–221, 320–340, 362–382, 394–414, 437–457, and 476–496; these read TLLG…VFLI, IVNG…DSFF, IPVI…LTMI, ILYI…FTLA, FFNW…TAIV, SWKL…IVFV, LLLA…LIIL, VIVI…VYPM, LQKV…SAIV, FIAS…ITLI, and VYWL…AWFY.

It belongs to the major facilitator superfamily. Proton-dependent oligopeptide transporter (POT/PTR) (TC 2.A.17) family. In terms of tissue distribution, not detected.

The protein resides in the membrane. Its function is as follows. Transporter involved in a passive nitrate efflux. The sequence is that of Putative protein NRT1/ PTR FAMILY 2.2 (NPF2.2) from Arabidopsis thaliana (Mouse-ear cress).